Here is a 679-residue protein sequence, read N- to C-terminus: Dihydroxyacetone phosphate acyltransferase (679 aa).

The residue at position 11 (S11) is a Phosphoserine. Residues 161–166 (HRSYID) carry the HXXXXD motif motif. N6-acetyllysine is present on K642.

This sequence belongs to the GPAT/DAPAT family. In terms of assembly, part of a heterotrimeric complex composed of GNPAT, AGPS and a modified form of GNPAT.

It localises to the peroxisome membrane. The enzyme catalyses dihydroxyacetone phosphate + an acyl-CoA = a 1-acylglycerone 3-phosphate + CoA. It carries out the reaction dihydroxyacetone phosphate + hexadecanoyl-CoA = 1-hexadecanoylglycerone 3-phosphate + CoA. It functions in the pathway membrane lipid metabolism; glycerophospholipid metabolism. In terms of biological role, dihydroxyacetonephosphate acyltransferase catalyzing the first step in the biosynthesis of plasmalogens, a subset of phospholipids that differ from other glycerolipids by having an alkyl chain attached through a vinyl ether linkage at the sn-1 position of the glycerol backbone, and which unique physical properties have an impact on various aspects of cell signaling and membrane biology. The protein is Dihydroxyacetone phosphate acyltransferase of Oryctolagus cuniculus (Rabbit).